The following is a 248-amino-acid chain: Ubiquinone/menaquinone biosynthesis C-methyltransferase UbiE (248 aa).

S-adenosyl-L-methionine is bound by residues Ser68 and Asp92.

It belongs to the class I-like SAM-binding methyltransferase superfamily. MenG/UbiE family.

The enzyme catalyses a 2-demethylmenaquinol + S-adenosyl-L-methionine = a menaquinol + S-adenosyl-L-homocysteine + H(+). It carries out the reaction a 2-methoxy-6-(all-trans-polyprenyl)benzene-1,4-diol + S-adenosyl-L-methionine = a 5-methoxy-2-methyl-3-(all-trans-polyprenyl)benzene-1,4-diol + S-adenosyl-L-homocysteine + H(+). It functions in the pathway quinol/quinone metabolism; menaquinone biosynthesis; menaquinol from 1,4-dihydroxy-2-naphthoate: step 2/2. Its pathway is cofactor biosynthesis; ubiquinone biosynthesis. Functionally, methyltransferase required for the conversion of demethylmenaquinol (DMKH2) to menaquinol (MKH2) and the conversion of 2-polyprenyl-6-methoxy-1,4-benzoquinol (DDMQH2) to 2-polyprenyl-3-methyl-6-methoxy-1,4-benzoquinol (DMQH2). The chain is Ubiquinone/menaquinone biosynthesis C-methyltransferase UbiE from Rickettsia rickettsii (strain Iowa).